The sequence spans 498 residues: NAD(P)H-quinone oxidoreductase chain 4, chloroplastic (498 aa).

A run of 14 helical transmembrane segments spans residues 4 to 24 (LPWLTLIVLFPFSASFLIPLL), 37 to 57 (LGICALEFLLITFTFCCQFHL), 87 to 107 (MGLILLTGFITTLAILAAWPV), 111 to 131 (VRLFYFLMLAMYSGQIGLFAS), 134 to 154 (ILLFFFMWELELIPVYLLLSM), 167 to 187 (FLLYTAGGSIFLLVGSLTMGL), 207 to 227 (IAVETALYFSFLIAYAVKLPI), 242 to 262 (HYSTCMLLAGILLKMGGYGLI), 274 to 294 (FLFSPLLVTMGAVQIAYASLI), 305 to 325 (IAYSSVSHMGFVIIGISSITD), 331 to 351 (AILQMISHGLIGAALFFLAGI), 386 to 406 (LALPGMSSFVAEFLIFLGIVT), 417 to 437 (IILFIGAIGVILTPIYLLSML), and 461 to 481 (IFISVFILLPILGIGIYPNLV).

The protein belongs to the complex I subunit 4 family.

It is found in the plastid. The protein localises to the chloroplast thylakoid membrane. It carries out the reaction a plastoquinone + NADH + (n+1) H(+)(in) = a plastoquinol + NAD(+) + n H(+)(out). The catalysed reaction is a plastoquinone + NADPH + (n+1) H(+)(in) = a plastoquinol + NADP(+) + n H(+)(out). The polypeptide is NAD(P)H-quinone oxidoreductase chain 4, chloroplastic (Psilotum nudum (Whisk fern)).